Consider the following 252-residue polypeptide: Imidazole glycerol phosphate synthase subunit HisF (252 aa).

Active-site residues include Asp11 and Asp130.

Belongs to the HisA/HisF family. In terms of assembly, heterodimer of HisH and HisF.

The protein resides in the cytoplasm. The enzyme catalyses 5-[(5-phospho-1-deoxy-D-ribulos-1-ylimino)methylamino]-1-(5-phospho-beta-D-ribosyl)imidazole-4-carboxamide + L-glutamine = D-erythro-1-(imidazol-4-yl)glycerol 3-phosphate + 5-amino-1-(5-phospho-beta-D-ribosyl)imidazole-4-carboxamide + L-glutamate + H(+). It functions in the pathway amino-acid biosynthesis; L-histidine biosynthesis; L-histidine from 5-phospho-alpha-D-ribose 1-diphosphate: step 5/9. Its function is as follows. IGPS catalyzes the conversion of PRFAR and glutamine to IGP, AICAR and glutamate. The HisF subunit catalyzes the cyclization activity that produces IGP and AICAR from PRFAR using the ammonia provided by the HisH subunit. The chain is Imidazole glycerol phosphate synthase subunit HisF from Staphylococcus aureus (strain Mu3 / ATCC 700698).